The following is a 173-amino-acid chain: Large ribosomal subunit protein uL10 (173 aa).

Belongs to the universal ribosomal protein uL10 family. As to quaternary structure, part of the ribosomal stalk of the 50S ribosomal subunit. The N-terminus interacts with L11 and the large rRNA to form the base of the stalk. The C-terminus forms an elongated spine to which L12 dimers bind in a sequential fashion forming a multimeric L10(L12)X complex.

In terms of biological role, forms part of the ribosomal stalk, playing a central role in the interaction of the ribosome with GTP-bound translation factors. In Geobacter sp. (strain M21), this protein is Large ribosomal subunit protein uL10.